The sequence spans 186 residues: Large ribosomal subunit protein uL22 (186 aa).

Positions 159-186 (KATDEEPTKKKLSKKKLQRQKEKMMRSE) are disordered. The segment covering 177-186 (RQKEKMMRSE) has biased composition (basic and acidic residues).

The protein belongs to the universal ribosomal protein uL22 family.

The sequence is that of Large ribosomal subunit protein uL22 (RpL17) from Phlebotomus papatasi (Sandfly).